The following is a 543-amino-acid chain: ATP synthase subunit alpha (543 aa).

Position 174–181 (G174–T181) interacts with ATP. The tract at residues V521 to K543 is disordered.

The protein belongs to the ATPase alpha/beta chains family. In terms of assembly, F-type ATPases have 2 components, CF(1) - the catalytic core - and CF(0) - the membrane proton channel. CF(1) has five subunits: alpha(3), beta(3), gamma(1), delta(1), epsilon(1). CF(0) has three main subunits: a(1), b(2) and c(9-12). The alpha and beta chains form an alternating ring which encloses part of the gamma chain. CF(1) is attached to CF(0) by a central stalk formed by the gamma and epsilon chains, while a peripheral stalk is formed by the delta and b chains.

The protein localises to the cell membrane. It carries out the reaction ATP + H2O + 4 H(+)(in) = ADP + phosphate + 5 H(+)(out). Functionally, produces ATP from ADP in the presence of a proton gradient across the membrane. The alpha chain is a regulatory subunit. The polypeptide is ATP synthase subunit alpha (Bifidobacterium longum (strain DJO10A)).